The chain runs to 128 residues: NADPH-dependent 7-cyano-7-deazaguanine reductase (128 aa).

Residue Cys-34 is the Thioimide intermediate of the active site. The Proton donor role is filled by Asp-41. Substrate contacts are provided by residues 56–58 (VEL) and 75–76 (HE).

Belongs to the GTP cyclohydrolase I family. QueF type 1 subfamily.

The protein resides in the cytoplasm. The catalysed reaction is 7-aminomethyl-7-carbaguanine + 2 NADP(+) = 7-cyano-7-deazaguanine + 2 NADPH + 3 H(+). Its pathway is tRNA modification; tRNA-queuosine biosynthesis. Its function is as follows. Catalyzes the NADPH-dependent reduction of 7-cyano-7-deazaguanine (preQ0) to 7-aminomethyl-7-deazaguanine (preQ1). The sequence is that of NADPH-dependent 7-cyano-7-deazaguanine reductase from Thermomicrobium roseum (strain ATCC 27502 / DSM 5159 / P-2).